The sequence spans 189 residues: Elongation factor P (189 aa).

Lysine 34 carries the post-translational modification N6-(3,6-diaminohexanoyl)-5-hydroxylysine.

This sequence belongs to the elongation factor P family. In terms of processing, may be beta-lysylated on the epsilon-amino group of Lys-34 by the combined action of EpmA and EpmB, and then hydroxylated on the C5 position of the same residue by EpmC (if this protein is present). Lysylation is critical for the stimulatory effect of EF-P on peptide-bond formation. The lysylation moiety may extend toward the peptidyltransferase center and stabilize the terminal 3-CCA end of the tRNA. Hydroxylation of the C5 position on Lys-34 may allow additional potential stabilizing hydrogen-bond interactions with the P-tRNA.

Its subcellular location is the cytoplasm. Its pathway is protein biosynthesis; polypeptide chain elongation. Functionally, involved in peptide bond synthesis. Alleviates ribosome stalling that occurs when 3 or more consecutive Pro residues or the sequence PPG is present in a protein, possibly by augmenting the peptidyl transferase activity of the ribosome. Modification of Lys-34 is required for alleviation. The polypeptide is Elongation factor P (Francisella philomiragia subsp. philomiragia (strain ATCC 25017 / CCUG 19701 / FSC 153 / O#319-036)).